The primary structure comprises 342 residues: Dihydroorotase (342 aa).

The Zn(2+) site is built by histidine 13 and histidine 15. Substrate-binding positions include 15–17 (HLR) and asparagine 41. The Zn(2+) site is built by lysine 98, histidine 135, and histidine 173. Lysine 98 is subject to N6-carboxylysine. Position 135 (histidine 135) interacts with substrate. Leucine 218 provides a ligand contact to substrate. Zn(2+) is bound at residue aspartate 246. Residue aspartate 246 is part of the active site. 2 residues coordinate substrate: histidine 250 and alanine 262.

This sequence belongs to the metallo-dependent hydrolases superfamily. DHOase family. Class II DHOase subfamily. As to quaternary structure, homodimer. Requires Zn(2+) as cofactor.

The enzyme catalyses (S)-dihydroorotate + H2O = N-carbamoyl-L-aspartate + H(+). Its pathway is pyrimidine metabolism; UMP biosynthesis via de novo pathway; (S)-dihydroorotate from bicarbonate: step 3/3. Catalyzes the reversible cyclization of carbamoyl aspartate to dihydroorotate. The sequence is that of Dihydroorotase from Photobacterium profundum (strain SS9).